A 392-amino-acid chain; its full sequence is Sterol methyltransferase-like 3 (392 aa).

The helical transmembrane segment at 20–42 threads the bilayer; the sequence is VTPWQAAAGVTAAIFIGSYLWHS.

This sequence belongs to the class I-like SAM-binding methyltransferase superfamily. Erg6/SMT family.

Its subcellular location is the microsome membrane. Unable to convert squalene, botryococcene, cycloartenol, zymosterol or lanosterol to mono-, di-, tri- or tetramethylated derivatives. In Botryococcus braunii (Green alga), this protein is Sterol methyltransferase-like 3 (SMT-3).